Reading from the N-terminus, the 51-residue chain is MPSHKTFQIKKKLAKKMRQNRPIPYWIRMRTDNTIRYNAKRRHWRRTKLGF.

Belongs to the eukaryotic ribosomal protein eL39 family.

The polypeptide is Large ribosomal subunit protein eL39x (RPL39C) (Oryza sativa subsp. japonica (Rice)).